Here is a 368-residue protein sequence, read N- to C-terminus: Glutaminyl-peptide cyclotransferase (368 aa).

Positions 1–23 are cleaved as a signal peptide; it reads MAGERRDSKAAAFFCLAWALCLA. Asparagine 53 carries N-linked (GlcNAc...) asparagine glycosylation. The cysteines at positions 143 and 169 are disulfide-linked. A Zn(2+)-binding site is contributed by aspartate 164. The Proton acceptor role is filled by glutamate 207. Glutamate 208 serves as a coordination point for Zn(2+). Aspartate 254 serves as the catalytic Proton acceptor. A glycan (N-linked (GlcNAc...) asparagine) is linked at asparagine 292. Position 336 (histidine 336) interacts with Zn(2+). An N-linked (GlcNAc...) asparagine glycan is attached at asparagine 352.

The protein belongs to the glutaminyl-peptide cyclotransferase family. As to expression, expressed by the venom gland.

It localises to the secreted. It catalyses the reaction N-terminal L-glutaminyl-[peptide] = N-terminal 5-oxo-L-prolyl-[peptide] + NH4(+). Responsible for the biosynthesis of pyroglutamyl peptides. Has a bias against acidic and tryptophan residues adjacent to the N-terminal glutaminyl residue and a lack of importance of chain length after the second residue. Also catalyzes N-terminal pyroglutamate formation. The chain is Glutaminyl-peptide cyclotransferase (QPCT) from Boiga dendrophila (Mangrove snake).